A 271-amino-acid polypeptide reads, in one-letter code: MVRPRKLFAQHWLKSEKALDAIVKAAECSTNDRILEIGPGTGILTRRLLPAVQSLVAVEIDRDLCELLAKQLGKKENFLLLQGDFLTIDLAANLGSFPKFQKPNKVVANIPYNITGPIIEKLLGTISNPNLEPFDSIVLLIQKEVAERLYAKSGSRTFGALSVRVQYLADCEFICDVPASAFHPPPKVDSAVVRLRPRQIEIPVNDPKRLENLVKLGFGAKRKMLRNNLQSVVDRDRLSQLLEQLNINPQARAEDISTQQWVKLANLLGVE.

6 residues coordinate S-adenosyl-L-methionine: His-11, Leu-13, Gly-38, Glu-59, Asp-84, and Asn-109.

It belongs to the class I-like SAM-binding methyltransferase superfamily. rRNA adenine N(6)-methyltransferase family. RsmA subfamily.

Its subcellular location is the cytoplasm. The catalysed reaction is adenosine(1518)/adenosine(1519) in 16S rRNA + 4 S-adenosyl-L-methionine = N(6)-dimethyladenosine(1518)/N(6)-dimethyladenosine(1519) in 16S rRNA + 4 S-adenosyl-L-homocysteine + 4 H(+). Specifically dimethylates two adjacent adenosines (A1518 and A1519) in the loop of a conserved hairpin near the 3'-end of 16S rRNA in the 30S particle. May play a critical role in biogenesis of 30S subunits. The polypeptide is Ribosomal RNA small subunit methyltransferase A (Nostoc sp. (strain PCC 7120 / SAG 25.82 / UTEX 2576)).